The following is a 140-amino-acid chain: Class I hydrophobin C (140 aa).

The signal sequence occupies residues 1–23 (MKFFVPAFLFAATAMALPGSGSA). 4 cysteine pairs are disulfide-bonded: cysteine 41–cysteine 114, cysteine 49–cysteine 108, cysteine 50–cysteine 85, and cysteine 115–cysteine 133.

Belongs to the fungal hydrophobin family.

The protein resides in the secreted. It localises to the cell wall. In terms of biological role, aerial growth, conidiation, and dispersal of filamentous fungi in the environment rely upon a capability of their secreting small amphipathic proteins called hydrophobins (HPBs) with low sequence identity. Class I can self-assemble into an outermost layer of rodlet bundles on aerial cell surfaces, conferring cellular hydrophobicity that supports fungal growth, development and dispersal; whereas Class II form highly ordered films at water-air interfaces through intermolecular interactions but contribute nothing to the rodlet structure. In P.expansum, hydrophobins contribute to germination, tolerance to cold stress and mycotoxins patulin and citrinin production. HfbC is involved in the virulence on apple. This chain is Class I hydrophobin C, found in Penicillium expansum (Blue mold rot fungus).